The chain runs to 224 residues: Large ribosomal subunit protein uL3 (224 aa).

The residue at position 158 (Q158) is an N5-methylglutamine.

Belongs to the universal ribosomal protein uL3 family. As to quaternary structure, part of the 50S ribosomal subunit. Forms a cluster with proteins L14 and L19. In terms of processing, methylated by PrmB.

One of the primary rRNA binding proteins, it binds directly near the 3'-end of the 23S rRNA, where it nucleates assembly of the 50S subunit. The sequence is that of Large ribosomal subunit protein uL3 from Acidovorax sp. (strain JS42).